The chain runs to 342 residues: UDP-3-O-acylglucosamine N-acyltransferase (342 aa).

H243 serves as the catalytic Proton acceptor.

This sequence belongs to the transferase hexapeptide repeat family. LpxD subfamily. As to quaternary structure, homotrimer.

The enzyme catalyses a UDP-3-O-[(3R)-3-hydroxyacyl]-alpha-D-glucosamine + a (3R)-hydroxyacyl-[ACP] = a UDP-2-N,3-O-bis[(3R)-3-hydroxyacyl]-alpha-D-glucosamine + holo-[ACP] + H(+). It participates in bacterial outer membrane biogenesis; LPS lipid A biosynthesis. Catalyzes the N-acylation of UDP-3-O-acylglucosamine using 3-hydroxyacyl-ACP as the acyl donor. Is involved in the biosynthesis of lipid A, a phosphorylated glycolipid that anchors the lipopolysaccharide to the outer membrane of the cell. The chain is UDP-3-O-acylglucosamine N-acyltransferase from Coxiella burnetii (strain CbuK_Q154) (Coxiella burnetii (strain Q154)).